We begin with the raw amino-acid sequence, 350 residues long: Ion-translocating oxidoreductase complex subunit D (350 aa).

The next 3 membrane-spanning stretches (helical) occupy residues 25–45, 89–109, and 124–144; these read ALCL…GSLI, IPPL…IIIV, and AMAG…SWVA. FMN phosphoryl threonine is present on threonine 185. Helical transmembrane passes span 212–232, 239–259, 265–285, 298–318, and 319–339; these read SYGV…LVLL, WHIS…GFLI, VSPL…FIAT, LIFG…GGYP, and DAVA…DHYV.

It belongs to the NqrB/RnfD family. The complex is composed of six subunits: RnfA, RnfB, RnfC, RnfD, RnfE and RnfG. It depends on FMN as a cofactor.

The protein resides in the cell inner membrane. In terms of biological role, part of a membrane-bound complex that couples electron transfer with translocation of ions across the membrane. In Shewanella denitrificans (strain OS217 / ATCC BAA-1090 / DSM 15013), this protein is Ion-translocating oxidoreductase complex subunit D.